Here is a 314-residue protein sequence, read N- to C-terminus: Putative peptide transport system permease protein BRA1092/BS1330_II1084 (314 aa).

A run of 6 helical transmembrane segments spans residues alanine 12–glycine 32, leucine 101–alanine 121, leucine 135–phenylalanine 155, tryptophan 177–alanine 197, valine 237–isoleucine 257, and methionine 286–isoleucine 306. The 210-residue stretch at leucine 95–tyrosine 304 folds into the ABC transmembrane type-1 domain.

It belongs to the binding-protein-dependent transport system permease family. In terms of assembly, the complex is composed of two ATP-binding proteins (BRA1094), two transmembrane proteins (BRA1092 and BRA1093) and a solute-binding protein (BRA1090).

It is found in the cell inner membrane. Probably part of an ABC transporter complex that could be involved in peptide import. Probably responsible for the translocation of the substrate across the membrane. The protein is Putative peptide transport system permease protein BRA1092/BS1330_II1084 of Brucella suis biovar 1 (strain 1330).